The chain runs to 407 residues: Protein-glutamine gamma-glutamyltransferase (407 aa).

Residues 1 to 31 (MRIRRRALVFATMSAVLCTAGFMPSAGEAAA) form the signal peptide. Positions 32–76 (DNGAGEETKSYAETYRLTADDVANINALNESAPAASSAGPSFRAP) are excised as a propeptide. Residues 62-72 (SAPAASSAGPS) are compositionally biased toward low complexity. Residues 62–98 (SAPAASSAGPSFRAPDSDDRVTPPAEPLDRMPDPYRP) are disordered. A compositionally biased stretch (basic and acidic residues) spans 76-94 (PDSDDRVTPPAEPLDRMPD). Residue Cys140 is part of the active site. The tract at residues 282 to 322 (QDRSSSADKRKYGDPDAFRPAPGTGLVDMSRDRNIPRSPTS) is disordered. The segment covering 286-298 (SSADKRKYGDPDA) has biased composition (basic and acidic residues). Catalysis depends on residues Asp331 and His350.

The protein belongs to the bacterial TGase family.

The enzyme catalyses L-glutaminyl-[protein] + L-lysyl-[protein] = [protein]-L-lysyl-N(6)-5-L-glutamyl-[protein] + NH4(+). Its function is as follows. Catalyzes the cross-linking of proteins and the conjugation of polyamines to proteins. The polypeptide is Protein-glutamine gamma-glutamyltransferase (Streptomyces mobaraensis (Streptoverticillium mobaraense)).